The primary structure comprises 144 residues: Large ribosomal subunit protein uL11 (144 aa).

The protein belongs to the universal ribosomal protein uL11 family. Part of the ribosomal stalk of the 50S ribosomal subunit. Interacts with L10 and the large rRNA to form the base of the stalk. L10 forms an elongated spine to which L12 dimers bind in a sequential fashion forming a multimeric L10(L12)X complex. In terms of processing, one or more lysine residues are methylated.

Forms part of the ribosomal stalk which helps the ribosome interact with GTP-bound translation factors. The protein is Large ribosomal subunit protein uL11 of Neisseria meningitidis serogroup A / serotype 4A (strain DSM 15465 / Z2491).